Consider the following 93-residue polypeptide: Small ribosomal subunit protein uS19c (93 aa).

It belongs to the universal ribosomal protein uS19 family.

It is found in the plastid. The protein resides in the chloroplast. In terms of biological role, protein S19 forms a complex with S13 that binds strongly to the 16S ribosomal RNA. The sequence is that of Small ribosomal subunit protein uS19c (rps19-A) from Zea mays (Maize).